Consider the following 428-residue polypeptide: Glutamyl-tRNA reductase (428 aa).

Substrate-binding positions include 55–58 (TCNR), Ser114, 119–121 (ETQ), and Gln125. The Nucleophile role is filled by Cys56. 194–199 (GAGEMI) provides a ligand contact to NADP(+).

The protein belongs to the glutamyl-tRNA reductase family. In terms of assembly, homodimer.

It catalyses the reaction (S)-4-amino-5-oxopentanoate + tRNA(Glu) + NADP(+) = L-glutamyl-tRNA(Glu) + NADPH + H(+). It functions in the pathway porphyrin-containing compound metabolism; protoporphyrin-IX biosynthesis; 5-aminolevulinate from L-glutamyl-tRNA(Glu): step 1/2. Catalyzes the NADPH-dependent reduction of glutamyl-tRNA(Glu) to glutamate 1-semialdehyde (GSA). The polypeptide is Glutamyl-tRNA reductase (Paraburkholderia xenovorans (strain LB400)).